Here is a 194-residue protein sequence, read N- to C-terminus: MPKGRRGSQNPKMSQRPAPPLYFPSLYDRGISSSPLSDFNIWKKLFVPLKAGGTPAAGVAGVAGVRSLPLAPPATVPPPPPGLGPPSERPCPPPWPSGLASIPYEPLRFFYSPPPGPEMATSALVPGSTTPWLASASHPEELCELEIRIKELELLTITGDGFDSQRYKFLKALKDEKLQGLKMSRQPGKSASCS.

Disordered stretches follow at residues 1 to 21 and 73 to 97; these read MPKG…APPL and PATV…PWPS. Residues 73 to 96 are compositionally biased toward pro residues; sequence PATVPPPPPGLGPPSERPCPPPWP.

This is an uncharacterized protein from Mus musculus (Mouse).